A 330-amino-acid polypeptide reads, in one-letter code: Probable cytosolic iron-sulfur protein assembly protein ciao1-A (330 aa).

7 WD repeats span residues 14 to 53 (HPDS…WECK), 59 to 98 (GHQR…FECL), 103 to 142 (GHEN…EYEC), 148 to 187 (SHTQ…WECR), 192 to 231 (GHTS…GGQD), 243 to 282 (FHGR…DPDQ), and 294 to 330 (AHSQ…QSEV).

The protein belongs to the WD repeat CIA1 family. In terms of assembly, component of the CIA complex.

Functionally, key component of the cytosolic iron-sulfur protein assembly (CIA) complex, a multiprotein complex that mediates the incorporation of iron-sulfur cluster into extramitochondrial Fe/S proteins. This is Probable cytosolic iron-sulfur protein assembly protein ciao1-A (ciao1a) from Salmo salar (Atlantic salmon).